The following is a 399-amino-acid chain: uncharacterized protein (399 aa).

The protein belongs to the TelA family.

This is an uncharacterized protein from Listeria monocytogenes serovar 1/2a (strain ATCC BAA-679 / EGD-e).